The chain runs to 394 residues: 1-deoxy-D-xylulose 5-phosphate reductoisomerase (394 aa).

NADPH is bound by residues threonine 12, glycine 13, serine 14, isoleucine 15, glycine 38, asparagine 41, and asparagine 132. Lysine 133 is a 1-deoxy-D-xylulose 5-phosphate binding site. Residue glutamate 134 coordinates NADPH. Mn(2+) is bound at residue aspartate 156. 1-deoxy-D-xylulose 5-phosphate is bound by residues serine 157, glutamate 158, serine 182, and histidine 205. Glutamate 158 is a Mn(2+) binding site. Position 211 (glycine 211) interacts with NADPH. Positions 218, 223, 224, and 227 each coordinate 1-deoxy-D-xylulose 5-phosphate. Glutamate 227 is a binding site for Mn(2+).

This sequence belongs to the DXR family. The cofactor is Mg(2+). Mn(2+) is required as a cofactor.

It carries out the reaction 2-C-methyl-D-erythritol 4-phosphate + NADP(+) = 1-deoxy-D-xylulose 5-phosphate + NADPH + H(+). It functions in the pathway isoprenoid biosynthesis; isopentenyl diphosphate biosynthesis via DXP pathway; isopentenyl diphosphate from 1-deoxy-D-xylulose 5-phosphate: step 1/6. Catalyzes the NADPH-dependent rearrangement and reduction of 1-deoxy-D-xylulose-5-phosphate (DXP) to 2-C-methyl-D-erythritol 4-phosphate (MEP). The protein is 1-deoxy-D-xylulose 5-phosphate reductoisomerase of Arthrobacter sp. (strain FB24).